Here is a 937-residue protein sequence, read N- to C-terminus: Putative leucine-rich repeat receptor-like serine/threonine-protein kinase At3g53590 (937 aa).

A signal peptide spans 1-20; it reads MIPPNINVLIRSICINLVTS. The Extracellular portion of the chain corresponds to 21 to 547; the sequence is LPLNFAYIFI…LLAQTSGIRT (527 aa). 4 N-linked (GlcNAc...) asparagine glycosylation sites follow: asparagine 50, asparagine 63, asparagine 90, and asparagine 114. 8 LRR repeats span residues 102-126, 127-150, 152-173, 174-198, 200-222, 223-249, 251-270, and 271-294; these read LLYL…IGRI, SSLK…LGNL, NLNR…SFGN, LRSI…LSKL, KLVH…LAQL, PSLT…HFSR, VKLS…LSRI, and ENLS…KLSD. N-linked (GlcNAc...) asparagine glycans are attached at residues asparagine 162, asparagine 184, and asparagine 210. 2 N-linked (GlcNAc...) asparagine glycosylation sites follow: asparagine 272 and asparagine 295. LRR repeat units follow at residues 296–316, 317–341, and 343–360; these read MTTI…SFSD, LNSL…IWQD, and SFEN…NFSD. N-linked (GlcNAc...) asparagine glycosylation is found at asparagine 327, asparagine 357, asparagine 370, asparagine 413, asparagine 499, and asparagine 516. The chain crosses the membrane as a helical span at residues 548 to 568; it reads IVWMMIVAGSVVAATVLSVTA. At 569–937 the chain is on the cytoplasmic side; that stretch reads TLLYVRKRRE…SGFFHAVKPR (369 aa). A Protein kinase domain is found at 614–886; that stretch reads FDSSTLIGRG…SKVVKELEGI (273 aa). Residues 620–628 and lysine 642 each bind ATP; that span reads IGRGSYGKV. Aspartate 738 serves as the catalytic Proton acceptor.

Belongs to the protein kinase superfamily. Ser/Thr protein kinase family.

The protein resides in the cell membrane. The catalysed reaction is L-seryl-[protein] + ATP = O-phospho-L-seryl-[protein] + ADP + H(+). The enzyme catalyses L-threonyl-[protein] + ATP = O-phospho-L-threonyl-[protein] + ADP + H(+). In Arabidopsis thaliana (Mouse-ear cress), this protein is Putative leucine-rich repeat receptor-like serine/threonine-protein kinase At3g53590.